We begin with the raw amino-acid sequence, 149 residues long: Large ribosomal subunit protein eL19 (149 aa).

The segment covering 55–69 (KGISSARKKEVQEQK) has biased composition (basic and acidic residues). The disordered stretch occupies residues 55 to 93 (KGISSARKKEVQEQKRKGKRKGPGSRRGAKGARTPKKEK). Residues 70–88 (RKGKRKGPGSRRGAKGART) are compositionally biased toward basic residues.

The protein belongs to the eukaryotic ribosomal protein eL19 family. In terms of assembly, part of the 50S ribosomal subunit.

Its function is as follows. Binds to the 23S rRNA. The chain is Large ribosomal subunit protein eL19 from Methanococcus vannielii.